Consider the following 76-residue polypeptide: Small ribosomal subunit protein bS18 (76 aa).

This sequence belongs to the bacterial ribosomal protein bS18 family. In terms of assembly, part of the 30S ribosomal subunit. Forms a tight heterodimer with protein bS6.

Functionally, binds as a heterodimer with protein bS6 to the central domain of the 16S rRNA, where it helps stabilize the platform of the 30S subunit. The chain is Small ribosomal subunit protein bS18 from Psychrobacter arcticus (strain DSM 17307 / VKM B-2377 / 273-4).